A 238-amino-acid chain; its full sequence is Probable transcriptional regulatory protein M6_Spy0297 (238 aa).

Belongs to the TACO1 family. YeeN subfamily.

The protein resides in the cytoplasm. This Streptococcus pyogenes serotype M6 (strain ATCC BAA-946 / MGAS10394) protein is Probable transcriptional regulatory protein M6_Spy0297.